Reading from the N-terminus, the 61-residue chain is Metallothionein-2B (61 aa).

Methionine 1 bears the N-acetylmethionine mark. The interval 1–29 (MDPNCSCAAGGSCTCAGSCKCKDCRCTSC) is beta. Residues cysteine 5, cysteine 7, cysteine 13, cysteine 15, cysteine 19, cysteine 21, cysteine 24, cysteine 26, cysteine 29, cysteine 33, cysteine 34, cysteine 36, cysteine 37, cysteine 41, cysteine 44, cysteine 48, cysteine 50, cysteine 57, cysteine 59, and cysteine 60 each contribute to the a divalent metal cation site. The tract at residues 30-61 (KKSCCSCCPAGCARCAQGCICKGASDKCSCCA) is alpha.

This sequence belongs to the metallothionein superfamily. Type 1 family. As to quaternary structure, monomer.

Its function is as follows. Metallothioneins have a high content of cysteine residues that bind various heavy metals; these proteins are transcriptionally regulated by both heavy metals and glucocorticoids. The sequence is that of Metallothionein-2B (MT2B) from Sus scrofa (Pig).